A 336-amino-acid polypeptide reads, in one-letter code: Holliday junction branch migration complex subunit RuvB (336 aa).

Residues 4–184 (ADRLISAGTT…FGIVQRLEFY (181 aa)) are large ATPase domain (RuvB-L). ATP contacts are provided by residues Ile-23, Arg-24, Gly-65, Lys-68, Thr-69, Thr-70, 131 to 133 (EDY), Arg-174, Tyr-184, and Arg-221. Mg(2+) is bound at residue Thr-69. The segment at 185 to 255 (QVPDLQYIVS…IAAQALDMLN (71 aa)) is small ATPAse domain (RuvB-S). Residues 258 to 336 (AEGFDYMDRK…HFGITPPEMP (79 aa)) form a head domain (RuvB-H) region. DNA-binding residues include Arg-294, Arg-313, and Arg-318.

Belongs to the RuvB family. As to quaternary structure, homohexamer. Forms an RuvA(8)-RuvB(12)-Holliday junction (HJ) complex. HJ DNA is sandwiched between 2 RuvA tetramers; dsDNA enters through RuvA and exits via RuvB. An RuvB hexamer assembles on each DNA strand where it exits the tetramer. Each RuvB hexamer is contacted by two RuvA subunits (via domain III) on 2 adjacent RuvB subunits; this complex drives branch migration. In the full resolvosome a probable DNA-RuvA(4)-RuvB(12)-RuvC(2) complex forms which resolves the HJ.

It localises to the cytoplasm. The catalysed reaction is ATP + H2O = ADP + phosphate + H(+). Functionally, the RuvA-RuvB-RuvC complex processes Holliday junction (HJ) DNA during genetic recombination and DNA repair, while the RuvA-RuvB complex plays an important role in the rescue of blocked DNA replication forks via replication fork reversal (RFR). RuvA specifically binds to HJ cruciform DNA, conferring on it an open structure. The RuvB hexamer acts as an ATP-dependent pump, pulling dsDNA into and through the RuvAB complex. RuvB forms 2 homohexamers on either side of HJ DNA bound by 1 or 2 RuvA tetramers; 4 subunits per hexamer contact DNA at a time. Coordinated motions by a converter formed by DNA-disengaged RuvB subunits stimulates ATP hydrolysis and nucleotide exchange. Immobilization of the converter enables RuvB to convert the ATP-contained energy into a lever motion, pulling 2 nucleotides of DNA out of the RuvA tetramer per ATP hydrolyzed, thus driving DNA branch migration. The RuvB motors rotate together with the DNA substrate, which together with the progressing nucleotide cycle form the mechanistic basis for DNA recombination by continuous HJ branch migration. Branch migration allows RuvC to scan DNA until it finds its consensus sequence, where it cleaves and resolves cruciform DNA. This is Holliday junction branch migration complex subunit RuvB from Shigella flexneri serotype 5b (strain 8401).